Consider the following 906-residue polypeptide: Protein translocase subunit SecA (906 aa).

ATP-binding positions include glutamine 86, 104–108 (GEGKT), and aspartate 511. 2 stretches are compositionally biased toward basic and acidic residues: residues 853–865 (HESV…RHDE) and 877–888 (VRREGPKVKRND). The tract at residues 853 to 906 (HESVIDNNQRHDEDEQEEAPKVQQVRREGPKVKRNDPCPCGSGKKYKQCHGKVE) is disordered. 4 residues coordinate Zn(2+): cysteine 890, cysteine 892, cysteine 901, and histidine 902. A compositionally biased stretch (basic residues) spans 896-906 (KKYKQCHGKVE).

The protein belongs to the SecA family. As to quaternary structure, monomer and homodimer. Part of the essential Sec protein translocation apparatus which comprises SecA, SecYEG and auxiliary proteins SecDF-YajC and YidC. Zn(2+) serves as cofactor.

It is found in the cell inner membrane. The protein localises to the cytoplasm. It carries out the reaction ATP + H2O + cellular proteinSide 1 = ADP + phosphate + cellular proteinSide 2.. In terms of biological role, part of the Sec protein translocase complex. Interacts with the SecYEG preprotein conducting channel. Has a central role in coupling the hydrolysis of ATP to the transfer of proteins into and across the cell membrane, serving both as a receptor for the preprotein-SecB complex and as an ATP-driven molecular motor driving the stepwise translocation of polypeptide chains across the membrane. This chain is Protein translocase subunit SecA, found in Francisella tularensis subsp. holarctica (strain OSU18).